We begin with the raw amino-acid sequence, 48 residues long: uncharacterized protein (48 aa).

It belongs to the ELIP/psbS family.

The protein resides in the plastid. It is found in the chloroplast. Its function is as follows. Possible role in chlorophyll and/or carotenoid binding. This is an uncharacterized protein from Pyropia yezoensis (Susabi-nori).